The primary structure comprises 608 residues: MLVWQSILLFLVGCVLSKSPTNLYTPGYVQCPEGKLTRSSLDGINSNEKAYIDRRYANAKSELSRFLHNAKMVDFDVDGFLNSNPTIGLAFSGGGYRAMLAGAGELLALDSRATNPSVLSGILQSSSYIVGLSGGSWLVGSLASNDLIPVDQLLREDKLWDIQNSLVAYYGVNIVRNTAMWGNINLQVQTKQLAGFTVSITDVYGRALSHQLLTNFDNQGASFLWSDVTETTSFQNNEMPYPILAALGREPNTVLMNFNSTVFELTPYEVGSWDPSLRSFVDTKYIGTRLDDGAPVSKRCVNGFDNAGFFMGTSSSLFNIVLQQLNNMPIPPFLKELISKFTLDPVEKLNIDIAQYNPNPFHKSNNSDTKIAQSRTLYLADGGEDGQNVPLLPLIHRKVSAIFAFDQSADKNNWPDGSALIKTFERQFSSQGDGIAFPYVPDQNTFRNTNLTSKPTFFGCDAQNLTSLTENIYDVPVVIYLANRPFTYFSNISTFKLKYSDTERQGMISNGYDVASRLNGKLDNEWAACVGCAIIRREQERLGIEQTEQCKKCFENYCWDGTIYKGEPLGDNFSDEGLTTSAAYYNSNNVAGINDGGIALVKRDDLSN.

The first 17 residues, 1-17 (MLVWQSILLFLVGCVLS), serve as a signal peptide directing secretion. The 535-residue stretch at 30 to 564 (QCPEGKLTRS…ENYCWDGTIY (535 aa)) folds into the PLA2c domain. 6 N-linked (GlcNAc...) asparagine glycosylation sites follow: Asn-259, Asn-365, Asn-450, Asn-464, Asn-491, and Asn-572.

It belongs to the lysophospholipase family.

It localises to the secreted. It catalyses the reaction a 1-acyl-sn-glycero-3-phosphocholine + H2O = sn-glycerol 3-phosphocholine + a fatty acid + H(+). In terms of biological role, catalyzes the release of fatty acids from lysophospholipids. Phospholipase B may well contribute to pathogenicity by abetting the fungus in damaging and traversing host cell membranes, processes which likely increase the rapidity of disseminated infection. This chain is Lysophospholipase 2 (PLB2), found in Candida albicans (Yeast).